Consider the following 286-residue polypeptide: 4-hydroxybenzoate octaprenyltransferase (286 aa).

7 helical membrane passes run 21–40 (GTLL…AGGM), 95–115 (ILFV…NGLV), 142–162 (FLGV…TGEV), 167–187 (WWLF…YAMV), 211–231 (IIGL…WSAE), 235–255 (LYGL…MLIF), and 266–286 (FLNN…DYLI).

It belongs to the UbiA prenyltransferase family. Mg(2+) is required as a cofactor.

The protein resides in the cell inner membrane. The enzyme catalyses all-trans-octaprenyl diphosphate + 4-hydroxybenzoate = 4-hydroxy-3-(all-trans-octaprenyl)benzoate + diphosphate. The protein operates within cofactor biosynthesis; ubiquinone biosynthesis. Functionally, catalyzes the prenylation of para-hydroxybenzoate (PHB) with an all-trans polyprenyl group. Mediates the second step in the final reaction sequence of ubiquinone-8 (UQ-8) biosynthesis, which is the condensation of the polyisoprenoid side chain with PHB, generating the first membrane-bound Q intermediate 3-octaprenyl-4-hydroxybenzoate. The polypeptide is 4-hydroxybenzoate octaprenyltransferase (Shewanella putrefaciens (strain CN-32 / ATCC BAA-453)).